Consider the following 402-residue polypeptide: MVDELGSNSEVGTLKVVILHRPGTELRRLTPRNTDQLLFDGLPWVSRAQEEHDQFAELLRSRGVEVLLLSELLTEALHSGAARMQGVAAAVDSRRLGIPLAQELSAYLRGLDPVRLSHVLTAGMTFNELPADARTDVSLVVRMHHDADFVIEPLPNLLFTRDSSIWIGPRFVIPSLAMRARVREASLTDIIYAHHPRFTGIRRAYESRTAPVEGGDVLLLAPGVVAVGVGERTTPAGAEALARSLFDDDLAHTVLAVPIAQRRAQMHLDTVCTMVDVDKVVMYANVVDELTAFTIERQPDGVTISDAAPFVEAAARAMGIEKLQVIGTGIDPVVAEREQWDDGNNTLALAPGVVVAYERNAQTNARLEAAGIEVLTIGGSELGTGRGGPRCMSCPVARDPLP.

Cys391 serves as the catalytic Amidino-cysteine intermediate.

Belongs to the arginine deiminase family.

The protein localises to the cytoplasm. The enzyme catalyses L-arginine + H2O = L-citrulline + NH4(+). It functions in the pathway amino-acid degradation; L-arginine degradation via ADI pathway; carbamoyl phosphate from L-arginine: step 1/2. This is Arginine deiminase from Mycobacterium marinum (strain ATCC BAA-535 / M).